Here is a 505-residue protein sequence, read N- to C-terminus: MIQVLLVIICLAAFPYQGTSIILESGNVNDYEVVYPRKVTALPKGAVQPKYEDAMQYELKVNGEPVVLHLPKNKALPSKDYIETHYSPDGRKITTNPPVEDHCYYHGRIQNDADSTASISACNGLKGHFKLQGETYLIEPLKLSNSEAHAVYKYEDVEKEDEAPKMCGVTQNWESYEPIKYEDVEKEDEAPKMCGVTQNWESYEPIKKASQSNLTPAHQRYIELVIVADHGMFTKYNGDSDKIREWVRQMVNTVDEIYSYMYIDVALAGLQIWSNEDLINVQPAAPHTLDSFGKWRERDLLHRIHHDNAMLLTAIDFDGPTIGLAYVGTMSNPKGSTGVVQDHSTINFRVAVTMAHEIGHNLGIHHDTGSCSCGGYSCIMSPVISHEPSKYFSDCSYTQCWDFIMNQKPQCILNKPLRTDTVSTPVSGNELLEAGEECDCGSPGNPCCDAATCKLRQGAQCAEGLCCDQCRFMKEGTICRRGRGDDLDDYCNGISAGCPRNPFHA.

Residues 1–20 (MIQVLLVIICLAAFPYQGTS) form the signal peptide. Residues 21–214 (IILESGNVND…PIKKASQSNL (194 aa)) constitute a propeptide that is removed on maturation. Repeat copies occupy residues 153 to 179 (KYED…YEPI) and 180 to 206 (KYED…YEPI). The region spanning 220-416 (RYIELVIVAD…QKPQCILNKP (197 aa)) is the Peptidase M12B domain. 2 residues coordinate Ca(2+): glutamate 223 and aspartate 307. Position 356 (histidine 356) interacts with Zn(2+). Residue glutamate 357 is part of the active site. Zn(2+)-binding residues include histidine 360 and histidine 366. 2 disulfide bridges follow: cysteine 371/cysteine 395 and cysteine 373/cysteine 378. Cysteine 411 and asparagine 414 together coordinate Ca(2+). Positions 417–432 (LRTDTVSTPVSGNELL) are excised as a propeptide. In terms of domain architecture, Disintegrin spans 424 to 505 (TPVSGNELLE…AGCPRNPFHA (82 aa)). Disulfide bonds link cysteine 438–cysteine 453, cysteine 440–cysteine 448, cysteine 447–cysteine 470, cysteine 461–cysteine 467, cysteine 466–cysteine 491, and cysteine 479–cysteine 498. Residues 483–485 (RGD) carry the Cell attachment site motif.

It belongs to the venom metalloproteinase (M12B) family. P-II subfamily. P-IIa sub-subfamily. Monomer. The cofactor is Zn(2+). Expressed by the venom gland.

Its subcellular location is the secreted. In terms of biological role, impairs hemostasis in the envenomed animal. Functionally, inhibits platelet aggregation induced by ADP, thrombin, platelet-activating factor and collagen. Acts by inhibiting fibrinogen interaction with platelet receptors GPIIb/GPIIIa (ITGA2B/ITGB3). The protein is Zinc metalloproteinase/disintegrin of Gloydius brevicauda (Korean slamosa snake).